A 447-amino-acid polypeptide reads, in one-letter code: Na(+)-translocating NADH-quinone reductase subunit A (447 aa).

The protein belongs to the NqrA family. As to quaternary structure, composed of six subunits; NqrA, NqrB, NqrC, NqrD, NqrE and NqrF.

It carries out the reaction a ubiquinone + n Na(+)(in) + NADH + H(+) = a ubiquinol + n Na(+)(out) + NAD(+). In terms of biological role, NQR complex catalyzes the reduction of ubiquinone-1 to ubiquinol by two successive reactions, coupled with the transport of Na(+) ions from the cytoplasm to the periplasm. NqrA to NqrE are probably involved in the second step, the conversion of ubisemiquinone to ubiquinol. This chain is Na(+)-translocating NADH-quinone reductase subunit A, found in Saccharophagus degradans (strain 2-40 / ATCC 43961 / DSM 17024).